The primary structure comprises 83 residues: ATP synthase subunit c, chloroplastic (83 aa).

A run of 2 helical transmembrane segments spans residues 3–23 and 57–77; these read PLIA…AAIG and FAFM…LLFA.

It belongs to the ATPase C chain family. F-type ATPases have 2 components, F(1) - the catalytic core - and F(0) - the membrane proton channel. F(1) has five subunits: alpha(3), beta(3), gamma(1), delta(1), epsilon(1). F(0) has four main subunits: a(1), b(1), b'(1) and c(10-14). The alpha and beta chains form an alternating ring which encloses part of the gamma chain. F(1) is attached to F(0) by a central stalk formed by the gamma and epsilon chains, while a peripheral stalk is formed by the delta, b and b' chains.

It is found in the plastid. It localises to the chloroplast thylakoid membrane. Its function is as follows. F(1)F(0) ATP synthase produces ATP from ADP in the presence of a proton or sodium gradient. F-type ATPases consist of two structural domains, F(1) containing the extramembraneous catalytic core and F(0) containing the membrane proton channel, linked together by a central stalk and a peripheral stalk. During catalysis, ATP synthesis in the catalytic domain of F(1) is coupled via a rotary mechanism of the central stalk subunits to proton translocation. In terms of biological role, key component of the F(0) channel; it plays a direct role in translocation across the membrane. A homomeric c-ring of between 10-14 subunits forms the central stalk rotor element with the F(1) delta and epsilon subunits. The sequence is that of ATP synthase subunit c, chloroplastic from Oedogonium cardiacum (Filamentous green alga).